Consider the following 421-residue polypeptide: Voltage-dependent calcium channel gamma-8 subunit (421 aa).

The next 4 helical transmembrane spans lie at 19-39, 127-147, 157-177, and 207-227; these read VQVL…TIAI, SSIF…CVAA, IILG…IGVI, and FGGL…NIYI. Phosphoserine occurs at positions 251 and 254. Residues 271–304 are disordered; sequence RRSRSSSRGSSEASPSRDASPGGPGGPGFASTDI. The segment covering 276-287 has biased composition (low complexity); sequence SSRGSSEASPSR. A helical membrane pass occupies residues 318-338; sequence VAAGLASAGGGGGGAGVGAYG. Disordered regions lie at residues 342–363 and 378–421; these read GAAG…GFLT and VTVT…TTPV. A compositionally biased stretch (pro residues) spans 384–397; sequence PAAPAPAPPAPAAP. Residues 408 to 421 are compositionally biased toward polar residues; the sequence is ASNTNTLNRKTTPV.

Belongs to the PMP-22/EMP/MP20 family. CACNG subfamily. Interacts with CACNA1C. Identified in a complex with the L-type calcium channel subunits CACNA1C, CACNA2D1 and either CACNB1 or CACNB2. Acts as an auxiliary subunit for AMPA-selective glutamate receptors (AMPARs). Found in a complex with GRIA1, GRIA2, GRIA3, GRIA4, CNIH2, CNIH3, CACNG2, CACNG3, CACNG4, CACNG5 and CACNG7. Interacts with CNIH2. Found in a complex with GRIA1, GRIA2, GRIA3, GRIA4, DLG4 and CNIH2. In terms of processing, palmitoylated. Probably palmitoylated by ZDHHC3 and ZDHHC7.

The protein localises to the cell membrane. The protein resides in the postsynaptic density membrane. Its function is as follows. Regulates the activity of L-type calcium channels that contain CACNA1C as pore-forming subunit. Regulates the trafficking and gating properties of AMPA-selective glutamate receptors (AMPARs). Promotes their targeting to the cell membrane and synapses and modulates their gating properties by slowing their rates of activation, deactivation and desensitization and by mediating their resensitization. Does not show subunit-specific AMPA receptor regulation and regulates all AMPAR subunits. Thought to stabilize the calcium channel in an inactivated (closed) state. This Rattus norvegicus (Rat) protein is Voltage-dependent calcium channel gamma-8 subunit.